Consider the following 449-residue polypeptide: PC-esterase domain-containing protein 1A (449 aa).

It belongs to the PC-esterase family.

In Mus musculus (Mouse), this protein is PC-esterase domain-containing protein 1A (Pced1a).